Here is a 117-residue protein sequence, read N- to C-terminus: Small ribosomal subunit protein bS6 (117 aa).

A disordered region spans residues 96-117 (HAEGPSVQMQKRDERDNRRERR). Over residues 105 to 117 (QKRDERDNRRERR) the composition is skewed to basic and acidic residues.

The protein belongs to the bacterial ribosomal protein bS6 family.

In terms of biological role, binds together with bS18 to 16S ribosomal RNA. This chain is Small ribosomal subunit protein bS6, found in Ruegeria sp. (strain TM1040) (Silicibacter sp.).